A 178-amino-acid polypeptide reads, in one-letter code: Large ribosomal subunit protein uL6 (178 aa).

The protein belongs to the universal ribosomal protein uL6 family. Part of the 50S ribosomal subunit.

Functionally, this protein binds to the 23S rRNA, and is important in its secondary structure. It is located near the subunit interface in the base of the L7/L12 stalk, and near the tRNA binding site of the peptidyltransferase center. This Corynebacterium glutamicum (strain R) protein is Large ribosomal subunit protein uL6.